The sequence spans 298 residues: Protein FAM221A (298 aa).

The segment covering 241–257 (SSPETLTDVGTSSQVSS) has biased composition (polar residues). Positions 241–263 (SSPETLTDVGTSSQVSSLRRPEE) are disordered.

It belongs to the FAM221 family.

The polypeptide is Protein FAM221A (FAM221A) (Homo sapiens (Human)).